We begin with the raw amino-acid sequence, 79 residues long: Cell division protein ZapB (79 aa).

A coiled-coil region spans residues 4–78 (EVFEKLEAKV…LRALLGKMEE (75 aa)).

Belongs to the ZapB family. As to quaternary structure, homodimer. The ends of the coiled-coil dimer bind to each other, forming polymers. Interacts with FtsZ.

It is found in the cytoplasm. Its function is as follows. Non-essential, abundant cell division factor that is required for proper Z-ring formation. It is recruited early to the divisome by direct interaction with FtsZ, stimulating Z-ring assembly and thereby promoting cell division earlier in the cell cycle. Its recruitment to the Z-ring requires functional FtsA or ZipA. This is Cell division protein ZapB from Pectobacterium carotovorum subsp. carotovorum (strain PC1).